Here is a 75-residue protein sequence, read N- to C-terminus: Cytochrome c oxidase subunit 6C (75 aa).

Residues 1 to 13 lie on the Mitochondrial matrix side of the membrane; it reads MAPEVLPKPRMRG. Residues 14–54 traverse the membrane as a helical segment; sequence LLARRLRNHMAVAFVLSLGVAALYKFRVADQRKKAYADFYR. The Mitochondrial intermembrane portion of the chain corresponds to 55–75; that stretch reads NYDVMKDFEEMRKAGIFQSVK.

This sequence belongs to the cytochrome c oxidase subunit 6c family. As to quaternary structure, component of the cytochrome c oxidase (complex IV, CIV), a multisubunit enzyme composed of 14 subunits. The complex is composed of a catalytic core of 3 subunits MT-CO1, MT-CO2 and MT-CO3, encoded in the mitochondrial DNA, and 11 supernumerary subunits COX4I1 (or COX4I2), COX5A, COX5B, COX6A1 (or COX6A2), COX6B1 (or COX6B2), COX6C, COX7A2 (or COX7A1), COX7B, COX7C, COX8A and NDUFA4, which are encoded in the nuclear genome. The complex exists as a monomer or a dimer and forms supercomplexes (SCs) in the inner mitochondrial membrane with NADH-ubiquinone oxidoreductase (complex I, CI) and ubiquinol-cytochrome c oxidoreductase (cytochrome b-c1 complex, complex III, CIII), resulting in different assemblies (supercomplex SCI(1)III(2)IV(1) and megacomplex MCI(2)III(2)IV(2)).

Its subcellular location is the mitochondrion inner membrane. It participates in energy metabolism; oxidative phosphorylation. Component of the cytochrome c oxidase, the last enzyme in the mitochondrial electron transport chain which drives oxidative phosphorylation. The respiratory chain contains 3 multisubunit complexes succinate dehydrogenase (complex II, CII), ubiquinol-cytochrome c oxidoreductase (cytochrome b-c1 complex, complex III, CIII) and cytochrome c oxidase (complex IV, CIV), that cooperate to transfer electrons derived from NADH and succinate to molecular oxygen, creating an electrochemical gradient over the inner membrane that drives transmembrane transport and the ATP synthase. Cytochrome c oxidase is the component of the respiratory chain that catalyzes the reduction of oxygen to water. Electrons originating from reduced cytochrome c in the intermembrane space (IMS) are transferred via the dinuclear copper A center (CU(A)) of subunit 2 and heme A of subunit 1 to the active site in subunit 1, a binuclear center (BNC) formed by heme A3 and copper B (CU(B)). The BNC reduces molecular oxygen to 2 water molecules using 4 electrons from cytochrome c in the IMS and 4 protons from the mitochondrial matrix. This is Cytochrome c oxidase subunit 6C (COX6C) from Homo sapiens (Human).